Consider the following 115-residue polypeptide: Ribosome-binding factor A (115 aa).

This sequence belongs to the RbfA family. As to quaternary structure, monomer. Binds 30S ribosomal subunits, but not 50S ribosomal subunits or 70S ribosomes.

It is found in the cytoplasm. Functionally, one of several proteins that assist in the late maturation steps of the functional core of the 30S ribosomal subunit. Associates with free 30S ribosomal subunits (but not with 30S subunits that are part of 70S ribosomes or polysomes). Required for efficient processing of 16S rRNA. May interact with the 5'-terminal helix region of 16S rRNA. The chain is Ribosome-binding factor A from Bacillus velezensis (strain DSM 23117 / BGSC 10A6 / LMG 26770 / FZB42) (Bacillus amyloliquefaciens subsp. plantarum).